The following is a 368-amino-acid chain: Ubl carboxyl-terminal hydrolase 18 (368 aa).

Positions 31 to 48 (MKRKRVLSRDLCSAWDSP) are mediates interaction with IFNAR2. The tract at residues 48-109 (PHGLVGLHNI…LLLLLEKMQD (62 aa)) is mediates interaction with STAT2. Residues 52–366 (VGLHNIGQTC…TAYLLVYTKT (315 aa)) form the USP domain. The Nucleophile role is filled by C61. Residues 299–308 (ELFAVIAHVG) form a mediates interaction with STAT2 and necessary for the negative regulation of the type I IFN signaling pathway region. Residues 309-368 (MADFGHYCAYIRNPVDGKWFCFNDSHVCWVTWKDVQCTYGNHRYRWRETAYLLVYTKTGS) form a mediates interaction with IFNAR2 region. H314 (proton acceptor) is an active-site residue.

Belongs to the peptidase C19 family. Interacts with STAT2; the interaction is direct. Interacts with IFNAR2; indirectly via STAT2, it negatively regulates the assembly of the ternary interferon-IFNAR1-IFNAR2 complex and inhibits type I interferon signaling. Interacts with STING1. Interacts with USP20.

The catalysed reaction is Thiol-dependent hydrolysis of ester, thioester, amide, peptide and isopeptide bonds formed by the C-terminal Gly of ubiquitin (a 76-residue protein attached to proteins as an intracellular targeting signal).. In terms of biological role, interferon-induced ISG15-specific protease that plays a crucial role for maintaining a proper balance of ISG15-conjugated proteins in cells. Regulates protein ISGylation by efficiently cleaving ISG15 conjugates linked via isopeptide bonds. Regulates T-cell activation and T-helper 17 (Th17) cell differentiation by deubiquitinating TAK1, likely to keep TAK1-TAB complexes in steady conditions. In turn, restricts activation of NF-kappa-B, NFAT, and JNK as well as expression of IL2 in T-cells after TCR activation. Acts as a molecular adapter with USP20 to promote innate antiviral response through deubiquitinating STING1. Involved also in the negative regulation of the inflammatory response triggered by type I interferon. Upon recruitment by STAT2 to the type I interferon receptor subunit IFNAR2 interferes with the assembly of the ternary interferon-IFNAR1-IFNAR2 complex and acts as a negative regulator of the type I interferon signaling pathway. In Mus musculus (Mouse), this protein is Ubl carboxyl-terminal hydrolase 18 (Usp18).